The sequence spans 125 residues: Large ribosomal subunit protein bL19 (125 aa).

It belongs to the bacterial ribosomal protein bL19 family.

This protein is located at the 30S-50S ribosomal subunit interface and may play a role in the structure and function of the aminoacyl-tRNA binding site. The polypeptide is Large ribosomal subunit protein bL19 (Synechococcus sp. (strain JA-2-3B'a(2-13)) (Cyanobacteria bacterium Yellowstone B-Prime)).